A 1456-amino-acid polypeptide reads, in one-letter code: Macrophage mannose receptor 1 (1456 aa).

An N-terminal signal peptide occupies residues 1–18 (MRLPLLLVFASVIPGAVL). At 19–1389 (LLDTRQFLIY…DPSKPSSNVA (1371 aa)) the chain is on the extracellular side. Residues 22-142 (TRQFLIYNED…SGLWSRWKIY (121 aa)) enclose the Ricin B-type lectin domain. 2 disulfide bridges follow: cysteine 35/cysteine 49 and cysteine 74/cysteine 91. Asparagine 104 carries an N-linked (GlcNAc...) asparagine glycan. The 49-residue stretch at 163–211 (ANGATCAFPFKFENKWYADCTSAGRSDGWLWCGTTTDYDTDKLFGYCPL) folds into the Fibronectin type-II domain. Intrachain disulfides connect cysteine 168/cysteine 194, cysteine 182/cysteine 209, cysteine 247/cysteine 340, and cysteine 316/cysteine 332. The region spanning 225 to 341 (LTSVSYQINS…CVQKLGYICK (117 aa)) is the C-type lectin 1 domain. N-linked (GlcNAc...) asparagine glycosylation occurs at asparagine 344. C-type lectin domains lie at 369–487 (YAGH…YICK), 511–626 (HHFY…FVCK), 655–778 (RTSL…WICQ), and 807–923 (YKDY…FICQ). 2 disulfide bridges follow: cysteine 391–cysteine 486 and cysteine 463–cysteine 478. Asparagine 529 carries an N-linked (GlcNAc...) asparagine glycan. 7 cysteine pairs are disulfide-bonded: cysteine 532–cysteine 625, cysteine 600–cysteine 617, cysteine 646–cysteine 659, cysteine 680–cysteine 777, cysteine 753–cysteine 769, cysteine 828–cysteine 922, and cysteine 899–cysteine 914. N-linked (GlcNAc...) asparagine glycosylation is found at asparagine 926 and asparagine 930. C-type lectin domains lie at 952-1080 (YSNK…YICQ), 1102-1213 (YGKS…FLCK), and 1241-1356 (FHGH…YICK). Disulfide bonds link cysteine 977–cysteine 1079, cysteine 1052–cysteine 1071, cysteine 1123–cysteine 1212, cysteine 1190–cysteine 1204, cysteine 1263–cysteine 1355, and cysteine 1332–cysteine 1347. Residue asparagine 1160 is glycosylated (N-linked (GlcNAc...) asparagine). Asparagine 1205 carries an N-linked (GlcNAc...) asparagine glycan. The chain crosses the membrane as a helical span at residues 1390–1410 (GVVIIVILLILTGAGLAAYFF). Over 1411–1456 (YKKRRVHLPQEGAFENTLYFNSQSSPGTSDMKDLVGNIEQNEHSVI) the chain is Cytoplasmic.

In terms of assembly, (Microbial infection) Interacts with Dengue virus. (Microbial infection) May act as a receptor for hepatitis B virus, enabling uptake of the virus in hepatic dendritic cells.

The protein localises to the endosome membrane. It localises to the cell membrane. In terms of biological role, mediates the endocytosis of glycoproteins by macrophages. Binds both sulfated and non-sulfated polysaccharide chains. Its function is as follows. (Microbial infection) Acts as a phagocytic receptor for bacteria, fungi and other pathogens. (Microbial infection) Acts as a receptor for Dengue virus envelope protein E. Functionally, (Microbial infection) Interacts with Hepatitis B virus envelope protein. This chain is Macrophage mannose receptor 1 (MRC1), found in Homo sapiens (Human).